Here is a 317-residue protein sequence, read N- to C-terminus: Cytochrome f (317 aa).

An N-terminal signal peptide occupies residues 1 to 34 (MKGLKNQIMKKTSLFICTLLFISSIVFHPKITFA). Heme-binding residues include Tyr-35, Cys-55, Cys-58, and His-59. Residues 284-304 (VIGLIAFFIGVGLTQILLVLK) traverse the membrane as a helical segment.

This sequence belongs to the cytochrome f family. As to quaternary structure, the 4 large subunits of the cytochrome b6-f complex are cytochrome b6, subunit IV (17 kDa polypeptide, PetD), cytochrome f and the Rieske protein, while the 4 small subunits are PetG, PetL, PetM and PetN. The complex functions as a dimer. Requires heme as cofactor.

The protein resides in the cellular thylakoid membrane. Functionally, component of the cytochrome b6-f complex, which mediates electron transfer between photosystem II (PSII) and photosystem I (PSI), cyclic electron flow around PSI, and state transitions. This Prochlorococcus marinus (strain MIT 9301) protein is Cytochrome f.